The chain runs to 549 residues: Tegument protein (549 aa).

3 disordered regions span residues 50–92, 353–391, and 523–542; these read KKKA…TASP, ETGDCSSLPNANTQTHRFPSPHKEMRPPPTNEADSCSSY, and TPIKTTSSSSPRPRNDTRSP. Polar residues-rich tracts occupy residues 75–84 and 356–369; these read PQALSVPSLS and DCSSLPNANTQTHR. Residues 523-534 are compositionally biased toward low complexity; the sequence is TPIKTTSSSSPR.

In terms of biological role, this viral structural protein may have important functions, such as protein kinase activity, DNA binding, and possible transcriptional activation of immediate-early genes. The sequence is that of Tegument protein from Homo sapiens (Human).